Consider the following 248-residue polypeptide: NH(3)-dependent NAD(+) synthetase (248 aa).

30–37 is an ATP binding site; it reads GLSGGIDS. Asp-36 lines the Mg(2+) pocket. Arg-114 provides a ligand contact to deamido-NAD(+). Position 134 (Thr-134) interacts with ATP. Residue Glu-139 coordinates Mg(2+). Deamido-NAD(+) contacts are provided by Lys-147 and Asp-154. Residues Lys-163 and Thr-185 each contribute to the ATP site. 232 to 233 contributes to the deamido-NAD(+) binding site; it reads HK.

Belongs to the NAD synthetase family. Homodimer.

The catalysed reaction is deamido-NAD(+) + NH4(+) + ATP = AMP + diphosphate + NAD(+) + H(+). The protein operates within cofactor biosynthesis; NAD(+) biosynthesis; NAD(+) from deamido-NAD(+) (ammonia route): step 1/1. Catalyzes the ATP-dependent amidation of deamido-NAD to form NAD. Uses ammonia as a nitrogen source. This Mycoplasma genitalium (strain ATCC 33530 / DSM 19775 / NCTC 10195 / G37) (Mycoplasmoides genitalium) protein is NH(3)-dependent NAD(+) synthetase.